Consider the following 1116-residue polypeptide: Protein translocase subunit SecA (1116 aa).

Residues glutamine 177, 195–199, and aspartate 692 each bind ATP; that span reads GEGKT.

This sequence belongs to the SecA family. Monomer and homodimer. Part of the essential Sec protein translocation apparatus which comprises SecA, SecYEG and auxiliary proteins SecDF. Other proteins may also be involved.

Its subcellular location is the cell inner membrane. The protein localises to the cytoplasm. The enzyme catalyses ATP + H2O + cellular proteinSide 1 = ADP + phosphate + cellular proteinSide 2.. Functionally, part of the Sec protein translocase complex. Interacts with the SecYEG preprotein conducting channel. Has a central role in coupling the hydrolysis of ATP to the transfer of proteins into and across the cell membrane, serving as an ATP-driven molecular motor driving the stepwise translocation of polypeptide chains across the membrane. This chain is Protein translocase subunit SecA, found in Flavobacterium psychrophilum (strain ATCC 49511 / DSM 21280 / CIP 103535 / JIP02/86).